Consider the following 763-residue polypeptide: Protein translocase subunit SecA 2 (763 aa).

Residues Q83, 101–105 (GEGKT), and D490 contribute to the ATP site.

Belongs to the SecA family. Monomer and homodimer. Part of the essential Sec protein translocation apparatus which comprises SecA, SecYEG and auxiliary proteins SecDF. Other proteins may also be involved.

The protein localises to the cell membrane. It localises to the cytoplasm. The catalysed reaction is ATP + H2O + cellular proteinSide 1 = ADP + phosphate + cellular proteinSide 2.. Functionally, part of the Sec protein translocase complex. Interacts with the SecYEG preprotein conducting channel. Has a central role in coupling the hydrolysis of ATP to the transfer of proteins into and across the cell membrane, serving as an ATP-driven molecular motor driving the stepwise translocation of polypeptide chains across the membrane. The protein is Protein translocase subunit SecA 2 of Corynebacterium glutamicum (strain ATCC 13032 / DSM 20300 / JCM 1318 / BCRC 11384 / CCUG 27702 / LMG 3730 / NBRC 12168 / NCIMB 10025 / NRRL B-2784 / 534).